Reading from the N-terminus, the 142-residue chain is Ig heavy chain V region IR2 (142 aa).

Residues 1-19 (MDLRLTYVFIVAILKGVLC) form the signal peptide. An Ig-like domain is found at 20-133 (EVKLEESGGG…YSENWFVYWG (114 aa)).

This chain is Ig heavy chain V region IR2, found in Rattus norvegicus (Rat).